Here is a 174-residue protein sequence, read N- to C-terminus: Large ribosomal subunit protein uL22 (174 aa).

This sequence belongs to the universal ribosomal protein uL22 family. Part of the 50S ribosomal subunit.

In terms of biological role, this protein binds specifically to 23S rRNA. It makes multiple contacts with different domains of the 23S rRNA in the assembled 50S subunit and ribosome. Functionally, the globular domain of the protein is located near the polypeptide exit tunnel on the outside of the subunit, while an extended beta-hairpin is found that lines the wall of the exit tunnel in the center of the 70S ribosome. The protein is Large ribosomal subunit protein uL22 of Nanoarchaeum equitans (strain Kin4-M).